A 350-amino-acid polypeptide reads, in one-letter code: Small ribosomal subunit biogenesis GTPase RsgA (350 aa).

Over residues 1–17 the composition is skewed to polar residues; it reads MSKNKLSKGQQRRVNAN. The segment at 1-33 is disordered; sequence MSKNKLSKGQQRRVNANHQRRLKTSKEKPDYDD. Residues 104–273 enclose the CP-type G domain; the sequence is TSVLTRPDFY…VIDSPGVREF (170 aa). Residues 160–163 and 214–222 each bind GTP; these read NKID and GQSGVGKSS. Positions 297, 302, 304, and 310 each coordinate Zn(2+).

The protein belongs to the TRAFAC class YlqF/YawG GTPase family. RsgA subfamily. As to quaternary structure, monomer. Associates with 30S ribosomal subunit, binds 16S rRNA. It depends on Zn(2+) as a cofactor.

Its subcellular location is the cytoplasm. In terms of biological role, one of several proteins that assist in the late maturation steps of the functional core of the 30S ribosomal subunit. Helps release RbfA from mature subunits. May play a role in the assembly of ribosomal proteins into the subunit. Circularly permuted GTPase that catalyzes slow GTP hydrolysis, GTPase activity is stimulated by the 30S ribosomal subunit. The sequence is that of Small ribosomal subunit biogenesis GTPase RsgA from Shigella boydii serotype 18 (strain CDC 3083-94 / BS512).